The primary structure comprises 88 residues: Sec-independent protein translocase protein TatA (88 aa).

A helical transmembrane segment spans residues 3–23 (IFGVGLPEVTVILILALLIFG). The segment at 56–88 (MNEQDKDESPISIESNQTNEINQEKIDSENSKK) is disordered. A compositionally biased stretch (polar residues) spans 67-76 (SIESNQTNEI). Over residues 77–88 (NQEKIDSENSKK) the composition is skewed to basic and acidic residues.

The protein belongs to the TatA/E family. Forms a complex with TatC.

It is found in the cell inner membrane. In terms of biological role, part of the twin-arginine translocation (Tat) system that transports large folded proteins containing a characteristic twin-arginine motif in their signal peptide across membranes. TatA could form the protein-conducting channel of the Tat system. This Prochlorococcus marinus (strain AS9601) protein is Sec-independent protein translocase protein TatA.